A 293-amino-acid polypeptide reads, in one-letter code: MVVSLFSSRNVFYTLSLCLFAALYQPVMSRPAKFEDDFRIAWSDTHITQIDGGRAIQLKLDPSSGCGFASKKQYLFGRVSMKIKLIPGDSAGTVTAFYMNSDTDSVRDELDFEFLGNRSGQPYTVQTNVFAHGKGDREQRVNLWFDPSRDFHEYAISWNHLRIVFYVDNVPIRVYKNNEARKVPYPRFQPMGVYSTLWEADDWATRGGIEKINWSRAPFYAYYKDFDIEGCPVPGPADCPANSKNWWEGSAYHQLSPVEARSYRWVRVNHMVYDYCTDKSRFPVPPPECSAGI.

The first 29 residues, 1-29, serve as a signal peptide directing secretion; it reads MVVSLFSSRNVFYTLSLCLFAALYQPVMS. A GH16 domain is found at 30-223; sequence RPAKFEDDFR…WSRAPFYAYY (194 aa). Glutamate 109 functions as the Nucleophile in the catalytic mechanism. Catalysis depends on glutamate 113, which acts as the Proton donor. Residue glutamate 113 coordinates xyloglucan. N-linked (GlcNAc...) asparagine glycosylation is present at asparagine 117. Residues 126-128, 136-138, 202-203, and glycine 207 contribute to the xyloglucan site; these read QTN, DRE, and DW. A glycan (N-linked (GlcNAc...) asparagine) is linked at asparagine 213. 2 disulfide bridges follow: cysteine 231–cysteine 239 and cysteine 276–cysteine 289. Arginine 281 contributes to the xyloglucan binding site.

Belongs to the glycosyl hydrolase 16 family. XTH group 1 subfamily. Contains at least one intrachain disulfide bond essential for its enzymatic activity.

It localises to the secreted. It is found in the cell wall. The protein localises to the extracellular space. The protein resides in the apoplast. The enzyme catalyses breaks a beta-(1-&gt;4) bond in the backbone of a xyloglucan and transfers the xyloglucanyl segment on to O-4 of the non-reducing terminal glucose residue of an acceptor, which can be a xyloglucan or an oligosaccharide of xyloglucan.. Functionally, catalyzes xyloglucan endohydrolysis (XEH) and/or endotransglycosylation (XET). Cleaves and religates xyloglucan polymers, an essential constituent of the primary cell wall, and thereby participates in cell wall construction of growing tissues. The polypeptide is Probable xyloglucan endotransglucosylase/hydrolase protein 7 (XTH7) (Arabidopsis thaliana (Mouse-ear cress)).